The following is a 501-amino-acid chain: Cytochrome P450 71B25 (501 aa).

The chain crosses the membrane as a helical span at residues Met-1–Tyr-21. Cys-445 is a heme binding site.

This sequence belongs to the cytochrome P450 family. Heme serves as cofactor.

Its subcellular location is the membrane. This Arabidopsis thaliana (Mouse-ear cress) protein is Cytochrome P450 71B25 (CYP71B25).